Consider the following 164-residue polypeptide: 16S rRNA aminocarboxypropyltransferase (164 aa).

Residues T18, I66, L87, and S106 each coordinate S-adenosyl-L-methionine.

Belongs to the TDD superfamily. TSR3 family.

It localises to the cytoplasm. It catalyses the reaction an N(1)-methylpseudouridine in rRNA + S-adenosyl-L-methionine = N(1)-methyl-N(3)-[(3S)-3-amino-3-carboxypropyl]pseudouridine in rRNA + S-methyl-5'-thioadenosine + H(+). Aminocarboxypropyltransferase that catalyzes the aminocarboxypropyl transfer on pseudouridine corresponding to position 914 in M.jannaschii 16S rRNA. It constitutes the last step in biosynthesis of the hypermodified N1-methyl-N3-(3-amino-3-carboxypropyl) pseudouridine (m1acp3-Psi). The polypeptide is 16S rRNA aminocarboxypropyltransferase (Thermoplasma volcanium (strain ATCC 51530 / DSM 4299 / JCM 9571 / NBRC 15438 / GSS1)).